The sequence spans 500 residues: Cytochrome P450 11B2, mitochondrial (500 aa).

Residues 1-24 (MALRVTADVWLARPWQCLHRTRAL) constitute a mitochondrion transit peptide. A 21-hydroxyprogesterone-binding site is contributed by phenylalanine 381. Heme is bound at residue cysteine 447.

Belongs to the cytochrome P450 family. The cofactor is heme.

The protein resides in the mitochondrion inner membrane. The enzyme catalyses a steroid + 2 reduced [adrenodoxin] + O2 + 2 H(+) = an 11beta-hydroxysteroid + 2 oxidized [adrenodoxin] + H2O. It carries out the reaction 21-hydroxyprogesterone + 2 reduced [adrenodoxin] + O2 + 2 H(+) = corticosterone + 2 oxidized [adrenodoxin] + H2O. The catalysed reaction is corticosterone + 2 reduced [adrenodoxin] + O2 + 2 H(+) = 18-hydroxycorticosterone + 2 oxidized [adrenodoxin] + H2O. It catalyses the reaction 18-hydroxycorticosterone + 2 reduced [adrenodoxin] + O2 + 2 H(+) = aldosterone + 2 oxidized [adrenodoxin] + 2 H2O. The enzyme catalyses 11-deoxycortisol + 2 reduced [adrenodoxin] + O2 + 2 H(+) = cortisol + 2 oxidized [adrenodoxin] + H2O. It carries out the reaction 21-hydroxyprogesterone + 2 reduced [adrenodoxin] + O2 + 2 H(+) = 18-hydroxy-11-deoxycorticosterone + 2 oxidized [adrenodoxin] + H2O. The catalysed reaction is cortisol + 2 reduced [adrenodoxin] + O2 + 2 H(+) = 18-hydroxycortisol + 2 oxidized [adrenodoxin] + H2O. It catalyses the reaction 18-hydroxycortisol + 2 reduced [adrenodoxin] + O2 + 2 H(+) = 18-oxocortisol + 2 oxidized [adrenodoxin] + 2 H2O. Its pathway is steroid biosynthesis. Its function is as follows. A cytochrome P450 monooxygenase that catalyzes the biosynthesis of aldosterone, the main mineralocorticoid in the human body responsible for salt and water homeostasis, thus involved in blood pressure regulation, arterial hypertension, and the development of heart failure. Catalyzes three sequential oxidative reactions of 11-deoxycorticosterone (21-hydroxyprogesterone), namely 11-beta hydroxylation, followed by two successive oxidations at C18 yielding 18-hydroxy and then 18-oxo intermediates (that would not leave the enzyme active site during the consecutive hydroxylation reactions), ending with the formation of aldosterone. Can also produce 18-hydroxycortisol and 18-oxocortisol, derived from successive oxidations of cortisol at C18, normally found at very low levels, but significantly increased in primary aldosteronism, the most common form of secondary hypertension. Mechanistically, uses molecular oxygen inserting one oxygen atom into a substrate and reducing the second into a water molecule. Two electrons are provided by NADPH via a two-protein mitochondrial transfer system comprising flavoprotein FDXR (adrenodoxin/ferredoxin reductase) and nonheme iron-sulfur protein FDX1 or FDX2 (adrenodoxin/ferredoxin). Could also be involved in the androgen metabolic pathway. This is Cytochrome P450 11B2, mitochondrial (Cyp11b2) from Mus musculus (Mouse).